The sequence spans 354 residues: MSLRKIIHIDCDCFYAAIEMRDDPRLAGRPMAVGGQPGQRGVIATCNYEARAYGVRSAMASGHALKLCPDLEIVKPRFEAYREASRDIHTIFRDYTDLIEPLSLDEAYLDVTDSQWFAGSATRIAEDIRRRVAQQLHITVSAGVAPNKFLAKIASDWRKPNGLFVITPDQVEEFVAQLPVARLHGVGKVTADKLARLGIDTCHALRDWPRLALVREFGSFGERLWGLARGIDERAVQNDSRRQSVSVENTYDHDLPDLNSCLEKLPELLSSLNERIARMDSSYRPDKPFVKVKFHDFSQTTMEQAGAGRDLESYRQLLSQAFARGGKPVRLLGVGVRLRDLRGAHEQLELFGDI.

The region spanning 6–187 (IIHIDCDCFY…LPVARLHGVG (182 aa)) is the UmuC domain. Residues Asp-10 and Asp-105 each coordinate Mg(2+). The active site involves Glu-106.

This sequence belongs to the DNA polymerase type-Y family. As to quaternary structure, monomer. Requires Mg(2+) as cofactor.

The protein localises to the cytoplasm. It catalyses the reaction DNA(n) + a 2'-deoxyribonucleoside 5'-triphosphate = DNA(n+1) + diphosphate. In terms of biological role, poorly processive, error-prone DNA polymerase involved in untargeted mutagenesis. Copies undamaged DNA at stalled replication forks, which arise in vivo from mismatched or misaligned primer ends. These misaligned primers can be extended by PolIV. Exhibits no 3'-5' exonuclease (proofreading) activity. May be involved in translesional synthesis, in conjunction with the beta clamp from PolIII. This chain is DNA polymerase IV, found in Pseudomonas entomophila (strain L48).